Reading from the N-terminus, the 98-residue chain is Large ribosomal subunit protein uL23 (98 aa).

Belongs to the universal ribosomal protein uL23 family. As to quaternary structure, part of the 50S ribosomal subunit. Contacts protein L29, and trigger factor when it is bound to the ribosome.

One of the early assembly proteins it binds 23S rRNA. One of the proteins that surrounds the polypeptide exit tunnel on the outside of the ribosome. Forms the main docking site for trigger factor binding to the ribosome. The protein is Large ribosomal subunit protein uL23 of Sorangium cellulosum (strain So ce56) (Polyangium cellulosum (strain So ce56)).